Reading from the N-terminus, the 1257-residue chain is Phosphatidylinositol 3,4,5-trisphosphate 5-phosphatase 2 (1257 aa).

Residues 21-117 (WYHRDLSRAA…GLVCALLLPV (97 aa)) enclose the SH2 domain. The segment covering 119-132 (GEREPDPPDDRDAS) has biased composition (basic and acidic residues). The disordered stretch occupies residues 119–181 (GEREPDPPDD…ESTPNGLSTV (63 aa)). The residue at position 132 (S132) is a Phosphoserine. Over residues 156–166 (PSSPLPTPETP) the composition is skewed to pro residues. Residue T165 is modified to Phosphothreonine. A phosphoserine mark is found at S241 and S353. Y887 bears the Phosphotyrosine mark. Position 891 is a phosphoserine (S891). A disordered region spans residues 897 to 986 (TGAKSKVPSV…PPKNSFNNPA (90 aa)). Residues 939–951 (PPPTGRPPAPPRA) show a composition bias toward pro residues. The SH3-binding motif lies at 945 to 950 (PPAPPR). Positions 952–966 (VPREEPLNPRLKSEG) are enriched in basic and acidic residues. The short motif at 984-987 (NPAY) is the NPXY motif element. Phosphotyrosine is present on Y987. A compositionally biased stretch (low complexity) spans 999 to 1008 (PLEPPSLARA). A disordered region spans residues 999–1119 (PLEPPSLARA…FLGEVASGDD (121 aa)). Pro residues-rich tracts occupy residues 1049–1060 (LPPPDFPPPPLP) and 1088–1104 (GPPP…PPGT). S1132 carries the phosphoserine modification. Residues 1134-1196 (VDYAPGPGRS…PQGGRASGLG (63 aa)) form a disordered region. Phosphotyrosine occurs at positions 1136 and 1161. One can recognise an SAM domain in the interval 1195–1257 (LGEAGMGAWL…LLLDTLQLSK (63 aa)). S1256 carries the phosphoserine modification.

It belongs to the inositol 1,4,5-trisphosphate 5-phosphatase family. Interacts with tyrosine phosphorylated form of SHC1. Interacts with EGFR. Upon stimulation by the EGF signaling pathway, it forms a complex with SHC1 and EGFR. Interacts with cytoskeletal protein SORBS3/vinexin, promoting its localization to the periphery of cells. Forms a complex with filamin (FLNA or FLNB), actin, GPIb (GP1BA or GP1BB) that regulates cortical and submembraneous actin. Interacts with c-Met/MET, when c-Met/MET is phosphorylated on 'Tyr-1356'. Interacts with p130Cas/BCAR1. Interacts with CENTD3/ARAP3 via its SAM domain. Interacts with c-Cbl/CBL and CAP/SORBS1. Interacts with activated EPHA2 receptor. Interacts with receptors FCGR2A. Interacts with FCGR2B. Interacts with tyrosine kinase ABL1. Interacts with tyrosine kinase TEC. Interacts with CSF1R. Interacts (via N-terminus) with SH3YL1 (via SH3 domain). Interacts (via SH2 domain) with tyrosine phosphorylated KLRC1 (via ITIM). Interacts with NEDD9/HEF1. Post-translationally, tyrosine phosphorylated by the members of the SRC family after exposure to a diverse array of extracellular stimuli such as insulin, growth factors such as EGF or PDGF, chemokines, integrin ligands and hypertonic and oxidative stress. May be phosphorylated upon IgG receptor FCGR2B-binding. Phosphorylated at Tyr-987 following cell attachment and spreading. Phosphorylated at Tyr-1161 following EGF signaling pathway stimulation. As to expression, widely expressed.

It is found in the cytoplasm. It localises to the cytosol. The protein resides in the cytoskeleton. Its subcellular location is the membrane. The protein localises to the cell projection. It is found in the filopodium. It localises to the lamellipodium. The protein resides in the basal cell membrane. Its subcellular location is the nucleus. The protein localises to the nucleus speckle. It is found in the spindle pole. The enzyme catalyses a 1,2-diacyl-sn-glycero-3-phospho-(1D-myo-inositol-3,4,5-trisphosphate) + H2O = a 1,2-diacyl-sn-glycero-3-phospho-(1D-myo-inositol-3,4-bisphosphate) + phosphate. It carries out the reaction 1,2-dioctanoyl-sn-glycero-3-phospho-(1D-myo-inositol-3,4,5-trisphosphate) + H2O = 1,2-dioctanoyl-sn-glycero-3-phospho-(1D-myo-inositol-3,4-bisphosphate) + phosphate. It catalyses the reaction 1,2-dihexadecanoyl-sn-glycero-3-phospho-(1D-myo-inositol-3,4,5-trisphosphate) + H2O = 1,2-dihexadecanoyl-sn-glycero-3-phospho-(1D-myo-inositol-3,4-bisphosphate) + phosphate. With respect to regulation, activated upon translocation to the sites of synthesis of PtdIns(3,4,5)P3 in the membrane. Enzymatic activity is enhanced in the presence of phosphatidylserine. In terms of biological role, phosphatidylinositol (PtdIns) phosphatase that specifically hydrolyzes the 5-phosphate of phosphatidylinositol-3,4,5-trisphosphate (PtdIns(3,4,5)P3) to produce PtdIns(3,4)P2, thereby negatively regulating the PI3K (phosphoinositide 3-kinase) pathways. Required for correct mitotic spindle orientation and therefore progression of mitosis. Plays a central role in regulation of PI3K-dependent insulin signaling, although the precise molecular mechanisms and signaling pathways remain unclear. While overexpression reduces both insulin-stimulated MAP kinase and Akt activation, its absence does not affect insulin signaling or GLUT4 trafficking. Confers resistance to dietary obesity. May act by regulating AKT2, but not AKT1, phosphorylation at the plasma membrane. Part of a signaling pathway that regulates actin cytoskeleton remodeling. Required for the maintenance and dynamic remodeling of actin structures as well as in endocytosis, having a major impact on ligand-induced EGFR internalization and degradation. Participates in regulation of cortical and submembraneous actin by hydrolyzing PtdIns(3,4,5)P3 thereby regulating membrane ruffling. Regulates cell adhesion and cell spreading. Required for HGF-mediated lamellipodium formation, cell scattering and spreading. Acts as a negative regulator of EPHA2 receptor endocytosis by inhibiting via PI3K-dependent Rac1 activation. Acts as a regulator of neuritogenesis by regulating PtdIns(3,4,5)P3 level and is required to form an initial protrusive pattern, and later, maintain proper neurite outgrowth. Acts as a negative regulator of the FC-gamma-RIIA receptor (FCGR2A). Mediates signaling from the FC-gamma-RIIB receptor (FCGR2B), playing a central role in terminating signal transduction from activating immune/hematopoietic cell receptor systems. Upon stimulation by EGF, it is recruited by EGFR and dephosphorylates PtdIns(3,4,5)P3. Plays a negative role in regulating the PI3K-PKB pathway, possibly by inhibiting PKB activity. Down-regulates Fc-gamma-R-mediated phagocytosis in macrophages independently of INPP5D/SHIP1. In macrophages, down-regulates NF-kappa-B-dependent gene transcription by regulating macrophage colony-stimulating factor (M-CSF)-induced signaling. Plays a role in the localization of AURKA and NEDD9/HEF1 to the basolateral membrane at interphase in polarized cysts, thereby mediates cell cycle homeostasis, cell polarization and cilia assembly. Additionally promotion of cilia growth is also facilitated by hydrolysis of (PtdIns(3,4,5)P3) to PtdIns(3,4)P2. Promotes formation of apical membrane-initiation sites during the initial stages of lumen formation via Rho family-induced actin filament organization and CTNNB1 localization to cell-cell contacts. May also hydrolyze PtdIns(1,3,4,5)P4, and could thus affect the levels of the higher inositol polyphosphates like InsP6. Involved in endochondral ossification. The polypeptide is Phosphatidylinositol 3,4,5-trisphosphate 5-phosphatase 2 (Mus musculus (Mouse)).